Reading from the N-terminus, the 56-residue chain is Ovomucoid (56 aa).

One can recognise a Kazal-like domain in the interval 6 to 56 (VDCSDHPKPACLQEQKPLCGSDNKTYDNKCSFCNAVVDSNGTLTLSHFGKC). 3 disulfides stabilise this stretch: Cys-8/Cys-38, Cys-16/Cys-35, and Cys-24/Cys-56. N-linked (GlcNAc...) asparagine glycosylation occurs at Asn-45.

It is found in the secreted. The sequence is that of Ovomucoid from Penelope jacquacu (Spix's guan).